The following is a 785-amino-acid chain: E3 UFM1-protein ligase 1 homolog (785 aa).

The span at 396-416 shows a compositional bias: basic and acidic residues; that stretch reads MKHQDVIPDKESAENKADKRD. Residues 396 to 473 are disordered; sequence MKHQDVIPDK…KSAGGKKGAK (78 aa). Basic residues predominate over residues 439-449; the sequence is KSTKKHARGHR.

This sequence belongs to the UFL1 family.

Its function is as follows. E3 UFM1-protein ligase that mediates ufmylation of target proteins. In Culex quinquefasciatus (Southern house mosquito), this protein is E3 UFM1-protein ligase 1 homolog.